The primary structure comprises 392 residues: Gastricsin (392 aa).

The N-terminal stretch at 1–16 is a signal peptide; that stretch reads MKWMVVALLCLPLLEA. Residues 17-62 constitute a propeptide, activation peptide; that stretch reads SLLRVPLRKMKSIRETMKEQGVLKDFLKTHKYDPGQKYHFGNFGDY. Positions 76–389 constitute a Peptidase A1 domain; sequence YFGEISIGTP…DMGNNKVGLA (314 aa). Asp-94 is an active-site residue. 2 disulfide bridges follow: Cys-107–Cys-112 and Cys-270–Cys-275. Residue Asp-280 is part of the active site. A disulfide bond links Cys-314 and Cys-347.

The protein belongs to the peptidase A1 family.

The protein localises to the secreted. The enzyme catalyses More restricted specificity than pepsin A, but shows preferential cleavage at Tyr-|-Xaa bonds. High activity on hemoglobin.. Functionally, hydrolyzes a variety of proteins. This is Gastricsin (Pgc) from Rattus norvegicus (Rat).